Reading from the N-terminus, the 301-residue chain is Small ribosomal subunit biogenesis GTPase RsgA (301 aa).

The CP-type G domain maps to 65–224; that stretch reads YNQLIRPKVA…LVDTPGFGNL (160 aa). GTP contacts are provided by residues 115 to 118 and 167 to 175; these read SKYD and GNSGVGKST. Zn(2+)-binding residues include Cys247, Cys252, His254, and Cys260.

The protein belongs to the TRAFAC class YlqF/YawG GTPase family. RsgA subfamily. Monomer. Associates with 30S ribosomal subunit, binds 16S rRNA. It depends on Zn(2+) as a cofactor.

It localises to the cytoplasm. In terms of biological role, one of several proteins that assist in the late maturation steps of the functional core of the 30S ribosomal subunit. Helps release RbfA from mature subunits. May play a role in the assembly of ribosomal proteins into the subunit. Circularly permuted GTPase that catalyzes slow GTP hydrolysis, GTPase activity is stimulated by the 30S ribosomal subunit. This Ureaplasma urealyticum serovar 10 (strain ATCC 33699 / Western) protein is Small ribosomal subunit biogenesis GTPase RsgA.